A 729-amino-acid chain; its full sequence is uncharacterized protein (729 aa).

This is an uncharacterized protein from Caenorhabditis elegans.